The chain runs to 379 residues: Galactose-1-phosphate uridylyltransferase (379 aa).

The segment covering 1–10 (MSHSGADPEQ) has biased composition (basic and acidic residues). The interval 1–20 (MSHSGADPEQRQQASEADAM) is disordered. Residue C75 coordinates Zn(2+). UDP-alpha-D-glucose is bound by residues A81, 97 to 98 (ND), and N173. Residue H184 coordinates Zn(2+). H186 acts as the Tele-UMP-histidine intermediate in catalysis. Q188 is a UDP-alpha-D-glucose binding site. Zn(2+) is bound by residues E202, H301, H319, and H321. UDP-alpha-D-glucose-binding positions include 334–337 (KFMV) and 339–340 (YE).

The protein belongs to the galactose-1-phosphate uridylyltransferase type 1 family. In terms of assembly, homodimer. Zn(2+) serves as cofactor.

It catalyses the reaction alpha-D-galactose 1-phosphate + UDP-alpha-D-glucose = alpha-D-glucose 1-phosphate + UDP-alpha-D-galactose. The protein operates within carbohydrate metabolism; galactose metabolism. Functionally, plays an important role in galactose metabolism. The protein is Galactose-1-phosphate uridylyltransferase (Galt) of Mus musculus (Mouse).